The following is a 371-amino-acid chain: Protein SPATA31F3 (371 aa).

A helical transmembrane segment spans residues 7-29 (ILWDVGSSVYTYGSLFIIALIIW). Residues 62-86 (LRVKKRTTKEETEKLQKLLSNMKRQ) adopt a coiled-coil conformation. Composition is skewed to polar residues over residues 189–203 (LSKV…LSSQ) and 244–266 (PQQQ…SSSS). Disordered regions lie at residues 189 to 222 (LSKV…STDQ), 240 to 299 (YHPA…EAEM), and 326 to 371 (YKSE…KRNI). Phosphoserine occurs at positions 197 and 198. The span at 277 to 287 (QKKRKKTKKLV) shows a compositional bias: basic residues. Over residues 330-362 (TGAKPKTGEPKKSSAKVRAEEPNLEKHAKDLKA) the composition is skewed to basic and acidic residues.

This sequence belongs to the SPATA31 family.

The protein resides in the membrane. The polypeptide is Protein SPATA31F3 (Spata31f3) (Mus musculus (Mouse)).